The chain runs to 64 residues: Large ribosomal subunit protein bL35 (64 aa).

Belongs to the bacterial ribosomal protein bL35 family.

The protein is Large ribosomal subunit protein bL35 of Coxiella burnetii (strain RSA 493 / Nine Mile phase I).